We begin with the raw amino-acid sequence, 160 residues long: Transcription elongation factor GreB (160 aa).

It belongs to the GreA/GreB family. GreB subfamily.

Necessary for efficient RNA polymerase transcription elongation past template-encoded arresting sites. The arresting sites in DNA have the property of trapping a certain fraction of elongating RNA polymerases that pass through, resulting in locked ternary complexes. Cleavage of the nascent transcript by cleavage factors such as GreA or GreB allows the resumption of elongation from the new 3'terminus. GreB releases sequences of up to 9 nucleotides in length. This Vibrio vulnificus (strain YJ016) protein is Transcription elongation factor GreB.